The chain runs to 277 residues: uncharacterized protein (277 aa).

This sequence belongs to the BtpA family.

It is found in the mitochondrion. This is an uncharacterized protein from Caenorhabditis elegans.